A 172-amino-acid chain; its full sequence is Adenine phosphoribosyltransferase (172 aa).

The protein belongs to the purine/pyrimidine phosphoribosyltransferase family. Homodimer.

It localises to the cytoplasm. The catalysed reaction is AMP + diphosphate = 5-phospho-alpha-D-ribose 1-diphosphate + adenine. It functions in the pathway purine metabolism; AMP biosynthesis via salvage pathway; AMP from adenine: step 1/1. Its function is as follows. Catalyzes a salvage reaction resulting in the formation of AMP, that is energically less costly than de novo synthesis. The protein is Adenine phosphoribosyltransferase of Nostoc punctiforme (strain ATCC 29133 / PCC 73102).